The chain runs to 348 residues: Zinc finger and SCAN domain-containing protein 16 (348 aa).

Residues 41–123 (RQHFRKLCYQ…TVLEDLEREL (83 aa)) enclose the SCAN box domain. Disordered stretches follow at residues 160–184 (PKKT…TKNE) and 205–226 (RLNK…EGRS). Over residues 163-184 (TQLEQEAGKPQRNGDKTRTKNE) the composition is skewed to basic and acidic residues. 4 consecutive C2H2-type zinc fingers follow at residues 236 to 258 (YKCD…RRTH), 264 to 286 (YKCD…HRVH), 292 to 314 (YKCK…QRIH), and 320 to 342 (YECD…QRIH).

The protein belongs to the krueppel C2H2-type zinc-finger protein family.

The protein localises to the nucleus. In terms of biological role, may be involved in transcriptional regulation. In Homo sapiens (Human), this protein is Zinc finger and SCAN domain-containing protein 16 (ZSCAN16).